A 486-amino-acid polypeptide reads, in one-letter code: UDP-N-acetylmuramate--L-alanine ligase (486 aa).

129–135 (GTHGKTT) provides a ligand contact to ATP.

The protein belongs to the MurCDEF family.

The protein resides in the cytoplasm. It carries out the reaction UDP-N-acetyl-alpha-D-muramate + L-alanine + ATP = UDP-N-acetyl-alpha-D-muramoyl-L-alanine + ADP + phosphate + H(+). The protein operates within cell wall biogenesis; peptidoglycan biosynthesis. Functionally, cell wall formation. The polypeptide is UDP-N-acetylmuramate--L-alanine ligase (Vibrio atlanticus (strain LGP32) (Vibrio splendidus (strain Mel32))).